The primary structure comprises 73 residues: Translation initiation factor IF-1 (73 aa).

One can recognise an S1-like domain in the interval 1 to 73 (MDIKEEAIET…TKGRIVYREK (73 aa)).

The protein belongs to the IF-1 family. Component of the 30S ribosomal translation pre-initiation complex which assembles on the 30S ribosome in the order IF-2 and IF-3, IF-1 and N-formylmethionyl-tRNA(fMet); mRNA recruitment can occur at any time during PIC assembly.

It is found in the cytoplasm. Its function is as follows. One of the essential components for the initiation of protein synthesis. Stabilizes the binding of IF-2 and IF-3 on the 30S subunit to which N-formylmethionyl-tRNA(fMet) subsequently binds. Helps modulate mRNA selection, yielding the 30S pre-initiation complex (PIC). Upon addition of the 50S ribosomal subunit IF-1, IF-2 and IF-3 are released leaving the mature 70S translation initiation complex. This Borreliella afzelii (strain PKo) (Borrelia afzelii) protein is Translation initiation factor IF-1.